The primary structure comprises 427 residues: WD repeat and SOCS box-containing protein 1 (427 aa).

WD repeat units follow at residues 129-170 (SRSI…LLLN), 173-213 (DHTD…NMVK), 217-256 (GHPN…LIRK), 259-298 (GHHN…ILLE), and 314-353 (ANDR…PQAV). The 49-residue stretch at 379-427 (SVHFWECPRSIASLQHLCRMALRRVKTTQQVEALPVPMPLRDFLTYRVV) folds into the SOCS box domain.

Component of a probable ECS E3 ubiquitin-protein ligase complex that contains the Elongin BC complex.

The protein operates within protein modification; protein ubiquitination. In terms of biological role, probable substrate-recognition component of a SCF-like ECS (Elongin-Cullin-SOCS-box protein) E3 ubiquitin-protein ligase complex which mediates the ubiquitination and subsequent proteasomal degradation of target proteins. The chain is WD repeat and SOCS box-containing protein 1 (wsb1) from Takifugu rubripes (Japanese pufferfish).